The primary structure comprises 372 residues: Glutamate 5-kinase (372 aa).

Lysine 14 is a binding site for ATP. Residues serine 54, aspartate 141, and asparagine 153 each contribute to the substrate site. Residue 173–174 (TD) coordinates ATP. Residues 280–358 (RGRVVIDAGA…SEIESVLGHL (79 aa)) form the PUA domain.

It belongs to the glutamate 5-kinase family.

It is found in the cytoplasm. The catalysed reaction is L-glutamate + ATP = L-glutamyl 5-phosphate + ADP. Its pathway is amino-acid biosynthesis; L-proline biosynthesis; L-glutamate 5-semialdehyde from L-glutamate: step 1/2. In terms of biological role, catalyzes the transfer of a phosphate group to glutamate to form L-glutamate 5-phosphate. The sequence is that of Glutamate 5-kinase from Cupriavidus pinatubonensis (strain JMP 134 / LMG 1197) (Cupriavidus necator (strain JMP 134)).